Consider the following 308-residue polypeptide: Glutaminase (308 aa).

Substrate contacts are provided by S66, N117, E161, N168, Y192, Y244, and V262.

This sequence belongs to the glutaminase family. Homotetramer.

The catalysed reaction is L-glutamine + H2O = L-glutamate + NH4(+). In Shigella dysenteriae serotype 1 (strain Sd197), this protein is Glutaminase.